The following is a 492-amino-acid chain: MDPSKYRPSSSFNTPFCTTNSGAPVWNNTCALTVGSRGPILLEDYHLVEKIQNFTRERIPERVVHARGASAKGFFEVTHDITHLTCADFLRAPGVQTPLIVRFSTVIHERGSPETIRDPRGFAVKMYTRGGNWDLVGNNFPVFFIRDGTQFPDVIHAFKPNPKSHIQENWRILDYLSHLPESLNTFAWFYDDVGIPTDYRHMEGFGVHTFTMINKEGKANYVKFHWKPTCGVKCLLEEEAIRIGGENHSHATQDLYESIAAGNYPEWKLYIQVMDPDHEDRFDFDPLDTTKIWPEELIPLQPVGRMVLNKNIDNFFAENEMLAMDPAHIVPGIYFSDDKMLQARVFAYADTHRHRLGPNYMLLPVNAPKCAHHNNSYDGYMNFVHRDEEVDYFPSKFDNTRNAERFPTPLRIVTGQRDKCVIEKENNFKQPGDRYRSWAPDRQDRFINRWVKALSEPRVTHEIRSTWISYLTQADRSLGQKVASRLNIRPTM.

Residues His65 and Asn138 contribute to the active site. Tyr348 is a binding site for heme.

This sequence belongs to the catalase family. As to quaternary structure, homotetramer. Requires heme as cofactor.

It is found in the cytoplasm. Its subcellular location is the cytosol. The protein localises to the peroxisome matrix. It catalyses the reaction 2 H2O2 = O2 + 2 H2O. Functionally, catalyzes the degradation of hydrogen peroxide (H(2)O(2)) generated by peroxisomal oxidases to water and oxygen, thereby protecting cells from the toxic effects of hydrogen peroxide. This chain is Catalase, found in Ipomoea batatas (Sweet potato).